Reading from the N-terminus, the 130-residue chain is Fluoride-specific ion channel FluC (130 aa).

Helical transmembrane passes span 3–23 (FVFL…YFVG), 39–59 (GTFS…HLAV), 67–87 (FGIF…SYGL), and 102–122 (ISYV…GWFL). Glycine 77 and threonine 80 together coordinate Na(+).

The protein belongs to the fluoride channel Fluc/FEX (TC 1.A.43) family.

The protein localises to the cell inner membrane. The enzyme catalyses fluoride(in) = fluoride(out). Na(+) is not transported, but it plays an essential structural role and its presence is essential for fluoride channel function. Functionally, fluoride-specific ion channel. Important for reducing fluoride concentration in the cell, thus reducing its toxicity. In Helicobacter pylori (strain P12), this protein is Fluoride-specific ion channel FluC.